The sequence spans 287 residues: Oxaloacetate decarboxylase (287 aa).

Ser-50 contacts substrate. Residue Asp-88 coordinates Mg(2+). Substrate is bound by residues Arg-159 and His-235.

Belongs to the isocitrate lyase/PEP mutase superfamily. Oxaloacetate decarboxylase family. Homotetramer; dimer of dimers. It depends on Mg(2+) as a cofactor.

It carries out the reaction oxaloacetate + H(+) = pyruvate + CO2. Its function is as follows. Catalyzes the decarboxylation of oxaloacetate into pyruvate. Seems to play a role in maintaining cellular concentrations of bicarbonate and pyruvate. The polypeptide is Oxaloacetate decarboxylase (Marinomonas sp. (strain MWYL1)).